The following is a 637-amino-acid chain: 1-deoxy-D-xylulose-5-phosphate synthase (637 aa).

Residues H76 and 117-119 (GHS) contribute to the thiamine diphosphate site. Position 148 (D148) interacts with Mg(2+). Thiamine diphosphate-binding positions include 149 to 150 (GA), N177, Y294, and E381. N177 contacts Mg(2+).

The protein belongs to the transketolase family. DXPS subfamily. Homodimer. It depends on Mg(2+) as a cofactor. Thiamine diphosphate serves as cofactor.

The catalysed reaction is D-glyceraldehyde 3-phosphate + pyruvate + H(+) = 1-deoxy-D-xylulose 5-phosphate + CO2. It participates in metabolic intermediate biosynthesis; 1-deoxy-D-xylulose 5-phosphate biosynthesis; 1-deoxy-D-xylulose 5-phosphate from D-glyceraldehyde 3-phosphate and pyruvate: step 1/1. In terms of biological role, catalyzes the acyloin condensation reaction between C atoms 2 and 3 of pyruvate and glyceraldehyde 3-phosphate to yield 1-deoxy-D-xylulose-5-phosphate (DXP). This is 1-deoxy-D-xylulose-5-phosphate synthase from Neisseria meningitidis serogroup A / serotype 4A (strain DSM 15465 / Z2491).